The primary structure comprises 325 residues: Nod factor export ATP-binding protein I (325 aa).

The ABC transporter domain maps to 27–257; it reads LELRKVRKQY…QIGCDVVEVY (231 aa). Residue 59–66 coordinates ATP; the sequence is GPNGAGKT.

Belongs to the ABC transporter superfamily. Lipooligosaccharide exporter (TC 3.A.1.102) family. In terms of assembly, the complex is composed of two ATP-binding proteins (NodI) and two transmembrane proteins (NodJ).

Its subcellular location is the cell inner membrane. Its function is as follows. Part of the ABC transporter complex NodIJ involved in the export of the nodulation factors (Nod factors), the bacterial signal molecules that induce symbiosis and subsequent nodulation induction. Nod factors are LCO (lipo-chitin oligosaccharide), a modified beta-1,4-linked N-acetylglucosamine oligosaccharide. This subunit is responsible for energy coupling to the transport system. In Cupriavidus pinatubonensis (strain JMP 134 / LMG 1197) (Cupriavidus necator (strain JMP 134)), this protein is Nod factor export ATP-binding protein I.